A 411-amino-acid chain; its full sequence is Glucose-1-phosphate adenylyltransferase (411 aa).

Alpha-D-glucose 1-phosphate-binding positions include G164, 179 to 180 (EK), and S197.

It belongs to the bacterial/plant glucose-1-phosphate adenylyltransferase family. Homotetramer.

The catalysed reaction is alpha-D-glucose 1-phosphate + ATP + H(+) = ADP-alpha-D-glucose + diphosphate. The protein operates within glycan biosynthesis; glycogen biosynthesis. In terms of biological role, involved in the biosynthesis of ADP-glucose, a building block required for the elongation reactions to produce glycogen. Catalyzes the reaction between ATP and alpha-D-glucose 1-phosphate (G1P) to produce pyrophosphate and ADP-Glc. This is Glucose-1-phosphate adenylyltransferase from Corynebacterium kroppenstedtii (strain DSM 44385 / JCM 11950 / CIP 105744 / CCUG 35717).